A 545-amino-acid chain; its full sequence is Chaperonin GroEL (545 aa).

ATP is bound by residues 29–32 (TLGP), 86–90 (DGTTT), Gly413, 476–478 (NAA), and Asp492.

This sequence belongs to the chaperonin (HSP60) family. As to quaternary structure, forms a cylinder of 14 subunits composed of two heptameric rings stacked back-to-back. Interacts with the co-chaperonin GroES.

The protein resides in the cytoplasm. It carries out the reaction ATP + H2O + a folded polypeptide = ADP + phosphate + an unfolded polypeptide.. In terms of biological role, together with its co-chaperonin GroES, plays an essential role in assisting protein folding. The GroEL-GroES system forms a nano-cage that allows encapsulation of the non-native substrate proteins and provides a physical environment optimized to promote and accelerate protein folding. This Oceanobacillus iheyensis (strain DSM 14371 / CIP 107618 / JCM 11309 / KCTC 3954 / HTE831) protein is Chaperonin GroEL.